The following is a 328-amino-acid chain: 4-hydroxythreonine-4-phosphate dehydrogenase (328 aa).

H135 and T136 together coordinate substrate. A divalent metal cation contacts are provided by H165, H210, and H265. Residues K273, N282, and R291 each coordinate substrate.

This sequence belongs to the PdxA family. As to quaternary structure, homodimer. The cofactor is Zn(2+). Mg(2+) is required as a cofactor. Co(2+) serves as cofactor.

It localises to the cytoplasm. It carries out the reaction 4-(phosphooxy)-L-threonine + NAD(+) = 3-amino-2-oxopropyl phosphate + CO2 + NADH. The protein operates within cofactor biosynthesis; pyridoxine 5'-phosphate biosynthesis; pyridoxine 5'-phosphate from D-erythrose 4-phosphate: step 4/5. In terms of biological role, catalyzes the NAD(P)-dependent oxidation of 4-(phosphooxy)-L-threonine (HTP) into 2-amino-3-oxo-4-(phosphooxy)butyric acid which spontaneously decarboxylates to form 3-amino-2-oxopropyl phosphate (AHAP). In Pseudomonas aeruginosa (strain ATCC 15692 / DSM 22644 / CIP 104116 / JCM 14847 / LMG 12228 / 1C / PRS 101 / PAO1), this protein is 4-hydroxythreonine-4-phosphate dehydrogenase.